The chain runs to 355 residues: Probable nitronate monooxygenase (355 aa).

FMN is bound by residues N71, Q175, G180, G218, and Q237–T240.

It belongs to the nitronate monooxygenase family. NMO class I subfamily. It depends on FMN as a cofactor.

The catalysed reaction is 3 propionate 3-nitronate + 3 O2 + H2O = 3 3-oxopropanoate + 2 nitrate + nitrite + H2O2 + 3 H(+). Nitronate monooxygenase that uses molecular oxygen to catalyze the oxidative denitrification of alkyl nitronates. Acts on propionate 3-nitronate (P3N), the presumed physiological substrate. Probably functions in the detoxification of P3N, a metabolic poison produced by plants and fungi as a defense mechanism. The chain is Probable nitronate monooxygenase from Staphylococcus aureus (strain USA300).